We begin with the raw amino-acid sequence, 554 residues long: Potassium-transporting ATPase potassium-binding subunit (554 aa).

The next 12 membrane-spanning stretches (helical) occupy residues 3 to 23 (PVLA…LAHV), 60 to 80 (PAYL…LYLL), 131 to 151 (GLAV…VALV), 174 to 194 (VRVL…CGVI), 252 to 272 (LFEI…FGIM), 279 to 299 (GYAI…LMMW), 323 to 343 (FGIG…TGAV), 352 to 372 (GLGG…PGGV), 375 to 395 (GLYG…LMVG), 412 to 432 (FAAC…AAAM), 481 to 501 (LGLA…ALAG), and 522 to 542 (LFAG…YFPA).

It belongs to the KdpA family. In terms of assembly, the system is composed of three essential subunits: KdpA, KdpB and KdpC.

The protein resides in the cell membrane. Its function is as follows. Part of the high-affinity ATP-driven potassium transport (or Kdp) system, which catalyzes the hydrolysis of ATP coupled with the electrogenic transport of potassium into the cytoplasm. This subunit binds the extracellular potassium ions and delivers the ions to the membrane domain of KdpB through an intramembrane tunnel. In Streptomyces coelicolor (strain ATCC BAA-471 / A3(2) / M145), this protein is Potassium-transporting ATPase potassium-binding subunit.